Reading from the N-terminus, the 235-residue chain is MRLAVNIDHIATLRNARNEGEPDPVAAALLAEESGAAGIVCHLREDRRHIRDNDLKGLRRSVKTKLDLEMAMTEEMQRIAIETVPELITLVPEKREELTTEGGFDIERHFKRLALFIEPIRAAGIEVSLFIEPDSRSIDLAAEAGSDLVELHTGSYALKSGEEQTAEFERIRHAAKYAVDRGLKVVAGHGLNYRNIQPFRQIPEIEEVSIGHALIARAAFVGIPEAVREMLDLIG.

A 3-amino-2-oxopropyl phosphate-binding site is contributed by Asn-6. Position 8 to 9 (8 to 9 (DH)) interacts with 1-deoxy-D-xylulose 5-phosphate. Arg-17 contributes to the 3-amino-2-oxopropyl phosphate binding site. The Proton acceptor role is filled by His-42. 2 residues coordinate 1-deoxy-D-xylulose 5-phosphate: Arg-44 and His-49. Glu-69 serves as the catalytic Proton acceptor. Residue Thr-99 participates in 1-deoxy-D-xylulose 5-phosphate binding. Catalysis depends on His-189, which acts as the Proton donor. Residues Gly-190 and 211 to 212 (GH) contribute to the 3-amino-2-oxopropyl phosphate site.

It belongs to the PNP synthase family. As to quaternary structure, homooctamer; tetramer of dimers.

It localises to the cytoplasm. The enzyme catalyses 3-amino-2-oxopropyl phosphate + 1-deoxy-D-xylulose 5-phosphate = pyridoxine 5'-phosphate + phosphate + 2 H2O + H(+). It participates in cofactor biosynthesis; pyridoxine 5'-phosphate biosynthesis; pyridoxine 5'-phosphate from D-erythrose 4-phosphate: step 5/5. Catalyzes the complicated ring closure reaction between the two acyclic compounds 1-deoxy-D-xylulose-5-phosphate (DXP) and 3-amino-2-oxopropyl phosphate (1-amino-acetone-3-phosphate or AAP) to form pyridoxine 5'-phosphate (PNP) and inorganic phosphate. The sequence is that of Pyridoxine 5'-phosphate synthase from Chlorobium luteolum (strain DSM 273 / BCRC 81028 / 2530) (Pelodictyon luteolum).